The primary structure comprises 527 residues: Bifunctional dihydrofolate reductase-thymidylate synthase (527 aa).

In terms of domain architecture, DHFR spans P28 to P238. Position 32 (V32) interacts with substrate. NADP(+)-binding positions include A34 and G40–T46. Residue D54 participates in substrate binding. Residues R84–T86 and L105–S108 contribute to the NADP(+) site. Residues I160, Y166, and T184 each coordinate substrate. An NADP(+)-binding site is contributed by G161–Q168. The tract at residues E243 to V527 is thymidylate synthase. R263 contacts dUMP. C409 is a catalytic residue. DUMP contacts are provided by residues H410, Q428–D432, N440, and H470–Y472.

It in the N-terminal section; belongs to the dihydrofolate reductase family. This sequence in the C-terminal section; belongs to the thymidylate synthase family. As to quaternary structure, homodimer.

The enzyme catalyses dUMP + (6R)-5,10-methylene-5,6,7,8-tetrahydrofolate = 7,8-dihydrofolate + dTMP. The catalysed reaction is (6S)-5,6,7,8-tetrahydrofolate + NADP(+) = 7,8-dihydrofolate + NADPH + H(+). It functions in the pathway pyrimidine metabolism; dTTP biosynthesis. Its pathway is cofactor biosynthesis; tetrahydrofolate biosynthesis; 5,6,7,8-tetrahydrofolate from 7,8-dihydrofolate: step 1/1. Its function is as follows. Bifunctional enzyme. Involved in de novo dTMP biosynthesis. Key enzyme in folate metabolism. Catalyzes an essential reaction for de novo glycine and purine synthesis, DNA precursor synthesis, and for the conversion of dUMP to dTMP. This is Bifunctional dihydrofolate reductase-thymidylate synthase from Trypanosoma brucei brucei.